A 451-amino-acid polypeptide reads, in one-letter code: Protoheme IX farnesyltransferase, mitochondrial (451 aa).

6 consecutive transmembrane segments (helical) span residues 149-169, 240-260, 265-285, 289-309, 339-359, and 414-434; these read TILV…PATV, PTVA…YTSL, IINT…GWAA, LTHP…FPHF, VALR…YFNI, and KAFF…ILHK.

This sequence belongs to the UbiA prenyltransferase family.

The protein resides in the mitochondrion membrane. In terms of biological role, converts protoheme IX and farnesyl diphosphate to heme O. The sequence is that of Protoheme IX farnesyltransferase, mitochondrial (COX10) from Candida glabrata (strain ATCC 2001 / BCRC 20586 / JCM 3761 / NBRC 0622 / NRRL Y-65 / CBS 138) (Yeast).